The chain runs to 1241 residues: Interphotoreceptor matrix proteoglycan 2 (1241 aa).

The first 22 residues, methionine 1–glycine 22, serve as a signal peptide directing secretion. Residues aspartate 23–proline 1099 are Extracellular-facing. N-linked (GlcNAc...) asparagine glycosylation occurs at asparagine 154. The tract at residues glutamate 180–isoleucine 223 is disordered. The span at aspartate 189–serine 199 shows a compositional bias: polar residues. 2 O-linked (GalNAc...) threonine glycosylation sites follow: threonine 190 and threonine 192. An SEA 1 domain is found at glycine 239–asparagine 353. The segment at glutamine 259–glutamine 267 is hyaluronan-binding motif involved in chondroitin sulfate A-binding. 3 N-linked (GlcNAc...) asparagine glycosylation sites follow: asparagine 301, asparagine 320, and asparagine 370. O-linked (GalNAc...) threonine glycans are attached at residues threonine 544 and threonine 556. Over residues glutamine 660–glutamate 678 the composition is skewed to basic and acidic residues. The segment at glutamine 660 to glycine 684 is disordered. The SEA 2 domain maps to glycine 897–glutamate 1010. Residues asparagine 942 and asparagine 956 are each glycosylated (N-linked (GlcNAc...) asparagine). EGF-like domains follow at residues glutamate 1010–glutamine 1051 and serine 1052–glutamate 1093. Cystine bridges form between cysteine 1014-cysteine 1025, cysteine 1019-cysteine 1036, cysteine 1038-cysteine 1050, cysteine 1054-cysteine 1067, cysteine 1061-cysteine 1077, and cysteine 1079-cysteine 1092. Positions arginine 1080–arginine 1088 are hyaluronan-binding motif involved in chondroitin sulfate C-binding. A helical membrane pass occupies residues valine 1100–isoleucine 1120. The Cytoplasmic portion of the chain corresponds to tyrosine 1121–valine 1241. The segment at arginine 1125–arginine 1133 is hyaluronan-binding motif involved in chondroitin sulfate A- and C-binding. Residues arginine 1136 to arginine 1145 form a hyaluronan-binding motif involved in chondroitin sulfate C-binding region. The segment at arginine 1210–arginine 1218 is hyaluronan-binding motif involved in chondroitin sulfate A- and C-binding motif.

Highly glycosylated (N- and O-linked carbohydrates). In terms of tissue distribution, expressed in the retina (at protein level). Expressed by photoreceptors of the interphotoreceptor matrix (IPM) surrounding both rods and cones (at protein level). IPM occupies the subretinal space between the apices of the retinal pigment epithelium and the neural retina. Expressed in the pineal gland (at protein level).

It is found in the photoreceptor outer segment membrane. The protein resides in the photoreceptor inner segment membrane. The protein localises to the secreted. It localises to the extracellular space. Its subcellular location is the extracellular matrix. It is found in the interphotoreceptor matrix. Its function is as follows. Chondroitin sulfate- and hyaluronan-binding proteoglycan involved in the organization of interphotoreceptor matrix; may participate in the maturation and maintenance of the light-sensitive photoreceptor outer segment. Binds heparin. This chain is Interphotoreceptor matrix proteoglycan 2 (IMPG2), found in Homo sapiens (Human).